A 509-amino-acid chain; its full sequence is Hyaluronidase PH-20 (509 aa).

An N-terminal signal peptide occupies residues 1-35; the sequence is MGVLKFKHIFFRSFVKSSGVSQIVFTFLLIPCCLT. 2 disulfide bridges follow: cysteine 60/cysteine 351 and cysteine 224/cysteine 238. An N-linked (GlcNAc...) asparagine glycan is attached at asparagine 82. Catalysis depends on glutamate 148, which acts as the Proton donor. 4 N-linked (GlcNAc...) asparagine glycosylation sites follow: asparagine 166, asparagine 235, asparagine 254, and asparagine 368. 3 disulfide bridges follow: cysteine 376–cysteine 387, cysteine 381–cysteine 435, and cysteine 437–cysteine 464. An N-linked (GlcNAc...) asparagine glycan is attached at asparagine 393. The GPI-anchor amidated serine moiety is linked to residue serine 490. Positions 491–509 are cleaved as a propeptide — removed in mature form; that stretch reads ATMFIVSILFLIISSVASL.

The protein belongs to the glycosyl hydrolase 56 family. N-glycosylated. Testis.

The protein localises to the cell membrane. It catalyses the reaction Random hydrolysis of (1-&gt;4)-linkages between N-acetyl-beta-D-glucosamine and D-glucuronate residues in hyaluronate.. In terms of biological role, involved in sperm-egg adhesion. Upon fertilization sperm must first penetrate a layer of cumulus cells that surrounds the egg before reaching the zona pellucida. The cumulus cells are embedded in a matrix containing hyaluronic acid which is formed prior to ovulation. This protein aids in penetrating the layer of cumulus cells by digesting hyaluronic acid. This Homo sapiens (Human) protein is Hyaluronidase PH-20 (SPAM1).